The following is a 526-amino-acid chain: Plant intracellular Ras-group-related LRR protein 5 (526 aa).

11 LRR repeats span residues 229 to 252, 253 to 275, 276 to 297, 298 to 321, 323 to 344, 346 to 367, 368 to 390, 391 to 414, 416 to 437, 438 to 463, and 465 to 484; these read LSSL…IGGL, ISLT…IGDL, LNLV…SFNR, LIHL…IGSL, SLKK…ISGC, SMEE…VGKL, STLE…MSSM, ANLK…CYAK, LVKL…LIGN, LEKL…TLSN, and RVLQ…ITEK. The GVYW; degenerate signature appears at 485–492; the sequence is GAQAVVQY.

It belongs to the SHOC2 family. As to expression, widely expressed but preferentially in roots.

Its function is as follows. Leucine-rich repeat protein that likely mediates protein interactions, possibly in the context of signal transduction. The protein is Plant intracellular Ras-group-related LRR protein 5 (PIRL5) of Arabidopsis thaliana (Mouse-ear cress).